The primary structure comprises 107 residues: Nucleoid-associated protein A1I_00660 (107 aa).

The tract at residues 81-107 (KCDSDSQNSMSGALSGMSLPPGFKMPF) is disordered.

It belongs to the YbaB/EbfC family. In terms of assembly, homodimer.

Its subcellular location is the cytoplasm. It localises to the nucleoid. In terms of biological role, binds to DNA and alters its conformation. May be involved in regulation of gene expression, nucleoid organization and DNA protection. The chain is Nucleoid-associated protein A1I_00660 from Rickettsia bellii (strain OSU 85-389).